The chain runs to 595 residues: Beta-(1--&gt;2)glucan export ATP-binding/permease protein NdvA (595 aa).

5 helical membrane passes run 21–41, 56–76, 129–149, 158–178, and 252–272; these read FLLICTANITLAIITIAEPIL, LVTLAVWMCFGISNIIAYVLV, IWLEFMRQHLSTFVALFVLVP, LSIVLMVLAILYILIARLVMQ, and ISIVCVLLLGAFFVIKGQLSV. The ABC transmembrane type-1 domain maps to 21-301; it reads FLLICTANIT…ISGFINLAVS (281 aa). Positions 335–569 constitute an ABC transporter domain; sequence IQFHHVTYEF…DGHFYKLLKR (235 aa). 368 to 375 serves as a coordination point for ATP; the sequence is GPTGAGKT.

The protein belongs to the ABC transporter superfamily. Beta-(1--&gt;2)glucan exporter (TC 3.A.1.108.1) family. In terms of assembly, homodimer.

It is found in the cell inner membrane. The catalysed reaction is [(1-&gt;2)-beta-D-glucosyl](n)(in) + ATP + H2O = [(1-&gt;2)-beta-D-glucosyl](n)(out) + ADP + phosphate + H(+). Its function is as follows. Involved in beta-(1--&gt;2)glucan export. Transmembrane domains (TMD) form a pore in the inner membrane and the ATP-binding domain (NBD) is responsible for energy generation. The chain is Beta-(1--&gt;2)glucan export ATP-binding/permease protein NdvA from Bartonella bacilliformis.